Consider the following 546-residue polypeptide: CTP synthase (546 aa).

Residues 1–266 are amidoligase domain; it reads MTKYIFVTGG…GDYLVERLGL (266 aa). Serine 13 contacts CTP. Serine 13 serves as a coordination point for UTP. Position 14-19 (14-19) interacts with ATP; it reads SVGKGI. Residue tyrosine 54 coordinates L-glutamine. Residue aspartate 71 coordinates ATP. Mg(2+)-binding residues include aspartate 71 and glutamate 141. Residues 148–150, 187–192, and lysine 223 each bind CTP; these read DIE and KTKPTQ. UTP is bound by residues 187–192 and lysine 223; that span reads KTKPTQ. Residues 291–533 enclose the Glutamine amidotransferase type-1 domain; that stretch reads PIALVGKYVE…VAAAAQTLLA (243 aa). Glycine 353 lines the L-glutamine pocket. Residue cysteine 380 is the Nucleophile; for glutamine hydrolysis of the active site. L-glutamine-binding positions include 381-384, glutamate 404, and arginine 461; that span reads LGMQ. Catalysis depends on residues histidine 506 and glutamate 508.

This sequence belongs to the CTP synthase family. As to quaternary structure, homotetramer.

The enzyme catalyses UTP + L-glutamine + ATP + H2O = CTP + L-glutamate + ADP + phosphate + 2 H(+). It catalyses the reaction L-glutamine + H2O = L-glutamate + NH4(+). The catalysed reaction is UTP + NH4(+) + ATP = CTP + ADP + phosphate + 2 H(+). Its pathway is pyrimidine metabolism; CTP biosynthesis via de novo pathway; CTP from UDP: step 2/2. With respect to regulation, allosterically activated by GTP, when glutamine is the substrate; GTP has no effect on the reaction when ammonia is the substrate. The allosteric effector GTP functions by stabilizing the protein conformation that binds the tetrahedral intermediate(s) formed during glutamine hydrolysis. Inhibited by the product CTP, via allosteric rather than competitive inhibition. Its function is as follows. Catalyzes the ATP-dependent amination of UTP to CTP with either L-glutamine or ammonia as the source of nitrogen. Regulates intracellular CTP levels through interactions with the four ribonucleotide triphosphates. The chain is CTP synthase from Chloroflexus aurantiacus (strain ATCC 29366 / DSM 635 / J-10-fl).